The following is a 116-amino-acid chain: Sperm mitochondrial-associated cysteine-rich protein (116 aa).

7 repeat units span residues 6–13, 14–21, 30–37, 38–45, 46–53, 54–61, and 62–68. Residues 6–68 form a 7 X 7 (OR 8) AA approximate repeats region; it reads KHSKCCPAKG…CQPKPPCCIQ (63 aa). Residues 80 to 116 form a disordered region; it reads VSPLNMESEPNSPQTQDKGCQTQQQPHSPQNESRPSK. Residues 93–104 show a composition bias toward low complexity; the sequence is QTQDKGCQTQQQ. A compositionally biased stretch (polar residues) spans 105–116; sequence PHSPQNESRPSK.

As to expression, testis. Is selectively expressed in the spermatids of seminiferous tubules.

It is found in the cytoplasm. Its subcellular location is the mitochondrion membrane. Functionally, involved in sperm motility. Its absence is associated with genetic background dependent male infertility. Infertility may be due to reduced sperm motility in the female reproductive tract and inability to penetrate the oocyte zona pellucida. The chain is Sperm mitochondrial-associated cysteine-rich protein (SMCP) from Homo sapiens (Human).